Consider the following 355-residue polypeptide: Guanine nucleotide-binding protein alpha-12 subunit (355 aa).

In terms of domain architecture, G-alpha spans 28–355 (RQINLLLLGS…EQNLKTLMMQ (328 aa)). The G1 motif stretch occupies residues 31–44 (NLLLLGSGESGKST). GTP is bound by residues 36-43 (GSGESGKS), 176-182 (LFCRKAT), 201-205 (DVGGQ), 270-273 (NKND), and Ala327. 2 residues coordinate Mg(2+): Ser43 and Thr182. A G2 motif region spans residues 174-182 (DILFCRKAT). Residues 197–206 (FRFIDVGGQR) are G3 motif. The interval 266-273 (ILFMNKND) is G4 motif. A G5 motif region spans residues 325-330 (TTAVDT).

It belongs to the G-alpha family. G proteins are composed of 3 units; alpha, beta and gamma. The alpha chain contains the guanine nucleotide binding site.

In terms of biological role, guanine nucleotide-binding proteins (G proteins) are involved as modulators or transducers in various transmembrane signaling systems. May play a role in resistance to fungal infection in the epidermis by regulating the up-regulation of several antimicrobial peptides of the NLP and CNC families. Upstream of plc-3, egl-8, tpa-1 and the p38-like pathway, required for the expression of antimicrobial peptide nlp-29 in the epidermis in response to fungal infection or physical injury. This is Guanine nucleotide-binding protein alpha-12 subunit (gpa-12) from Caenorhabditis briggsae.